The sequence spans 521 residues: Vang-like protein 2-B (521 aa).

The span at 1 to 18 (MDNDSQYSGYSYKSGQSR) shows a compositional bias: low complexity. The interval 1–73 (MDNDSQYSGY…RDDNWGETTT (73 aa)) is disordered. Over 1 to 108 (MDNDSQYSGY…AKLDCSRHLG (108 aa)) the chain is Cytoplasmic. Basic residues predominate over residues 19 to 33 (SSRKHRDRRERHRSK). Residues 57 to 67 (ESTRGEDRDDN) are compositionally biased toward basic and acidic residues. Residues 109 to 129 (VVIAGALALLSFLTPIAFMLL) traverse the membrane as a helical segment. The Extracellular segment spans residues 130 to 147 (PQILWREDLEQCGTACEG). The chain crosses the membrane as a helical span at residues 148–168 (LFISVAFKLLILLLGSWALFF). Residues 169–178 (RRPKAFFPRV) lie on the Cytoplasmic side of the membrane. A helical membrane pass occupies residues 179–199 (FVFRALLMVLVFLLVVSYWLF). Residues 200–218 (YGVRILESRDKNYQGIVQY) are Extracellular-facing. Residues 219–239 (AVSLVDALLFVHYLAVVLLEL) form a helical membrane-spanning segment. Residues 240 to 521 (RQLQPQFTIK…VMRLQSETSV (282 aa)) are Cytoplasmic-facing. The PDZ-binding motif lies at 518-521 (ETSV).

Belongs to the Vang family. In terms of assembly, interacts with dvl/dsh. Interacts with prickle3. In terms of tissue distribution, during gastrulation, broadly expressed in the dorsal region in both mesodermal and neural tissues. From the neurula stages, expressed throughout the neural tube. In tailbud stages, expression declines in the anterior notochord but remains strong in the posterior notochord and in the neural tube. Also weakly expressed in the prenephritic region of late tailbud embryos.

The protein resides in the cell membrane. Its function is as follows. Has a role in non-canonical Wnt/planar cell polarity (PCP) signaling; can recruit dvl/dsh and prickle from the cytoplasm to the plasma membrane. Acts in a PCP complex to regulate the polarized assembly of fibronectrin on the surface of the mesoderm during gastrulation. Regulates convergent extension in both dorsal mesoderm and neural tissue without affecting cell fate. Regulates neural fold closure during neurulation. May be required for cell surface localization of fzd3 and fzd6 in the inner ear. The sequence is that of Vang-like protein 2-B (vangl2-b) from Xenopus laevis (African clawed frog).